A 635-amino-acid polypeptide reads, in one-letter code: Threonine--tRNA ligase (635 aa).

Positions 1 to 144 are editing domain; that stretch reads MQLLLIHSDY…RSIRPEGTQR (144 aa). Positions 215 to 514 are catalytic; it reads PHVELMRRLE…TEEGKVPMLP (300 aa). Positions 307, 359, and 483 each coordinate Zn(2+).

This sequence belongs to the class-II aminoacyl-tRNA synthetase family. In terms of assembly, homodimer. The cofactor is Zn(2+).

It is found in the cytoplasm. It carries out the reaction tRNA(Thr) + L-threonine + ATP = L-threonyl-tRNA(Thr) + AMP + diphosphate + H(+). Its function is as follows. Catalyzes the attachment of threonine to tRNA(Thr) in a two-step reaction: L-threonine is first activated by ATP to form Thr-AMP and then transferred to the acceptor end of tRNA(Thr). Also edits incorrectly charged L-seryl-tRNA(Thr). This chain is Threonine--tRNA ligase, found in Methanosarcina barkeri (strain Fusaro / DSM 804).